Consider the following 457-residue polypeptide: Multidrug resistance protein MdtK (457 aa).

The next 12 membrane-spanning stretches (helical) occupy residues 11–31 (LLAL…MGFV), 53–73 (IWLP…PVIA), 93–113 (WLAG…GYII), 127–147 (AVGY…FQVA), 160–180 (GMVM…IFIY), 189–209 (GGVG…LAMV), 243–263 (LPIA…ALLV), 276–296 (IALN…AAVT), 314–334 (AART…IFTV), 350–370 (VVTL…SDSI), 387–407 (IFYI…YILA), and 418–438 (PAGF…MMML).

Belongs to the multi antimicrobial extrusion (MATE) (TC 2.A.66.1) family. MdtK subfamily.

The protein resides in the cell inner membrane. Multidrug efflux pump that functions probably as a Na(+)/drug antiporter. The chain is Multidrug resistance protein MdtK from Escherichia coli (strain SE11).